We begin with the raw amino-acid sequence, 402 residues long: MTDSWTWLQRGTHEIFPDQPESADPDVSLLARLQQGDRPLRIKLGIDPTGSDIHLGHSIIFRKLRQFQDAGHTAVLIIGDFTARIGDPTGKSEVRRQLTAEDVQRNAETYLDQLRPILDFETPGRLEIRYNSEWLAGLDLAKILELLGTMTVGQMLAKEGFSERYDKGTPVYLHEFLYPLMQGYDSVAVQSDVELGGTDQKFNIAVGRDLQRHFGLQPQFGLLLPILIGLDGSQKMSKSLGNYVGLNEDALSMYSKLEKVPDALVADYFELLTSQDLAALPENPRDRQKLLALDVVSQYHGAEAAAAAQKAAQELVQGSAVQAEAVPEFPLSQVNFPAKAFYLVSAVGLGLTSSEARRQIQGGAVRLDGQKLDDPNHIFEAPTALKGRVIQVGKKKFVRLVL.

Residues 48–57 carry the 'HIGH' region motif; it reads PTGSDIHLGH. Residues 235 to 239 carry the 'KMSKS' region motif; that stretch reads KMSKS. K238 provides a ligand contact to ATP. One can recognise an S4 RNA-binding domain in the interval 338–402; the sequence is AKAFYLVSAV…GKKKFVRLVL (65 aa).

The protein belongs to the class-I aminoacyl-tRNA synthetase family. TyrS type 2 subfamily. As to quaternary structure, homodimer.

The protein resides in the cytoplasm. The enzyme catalyses tRNA(Tyr) + L-tyrosine + ATP = L-tyrosyl-tRNA(Tyr) + AMP + diphosphate + H(+). Functionally, catalyzes the attachment of tyrosine to tRNA(Tyr) in a two-step reaction: tyrosine is first activated by ATP to form Tyr-AMP and then transferred to the acceptor end of tRNA(Tyr). This is Tyrosine--tRNA ligase from Synechococcus elongatus (strain ATCC 33912 / PCC 7942 / FACHB-805) (Anacystis nidulans R2).